We begin with the raw amino-acid sequence, 670 residues long: MVEPDMQKKASGGSGGSEMDTLNATSNSSKQGVSNNKRNPVSKKKPGNKVSDGRDNAHNYHGEGRRKSSKQQRSRTPYKETSTRINDQDIDLSIQEEILGGNFKLRGRKTQVSINHLLNFQLPEVEREKSRSSSSKKSNRRRDEHVHLHGDTFVNVNYRLLVDDRFDYPEQNCNPNVPVDQEKILRVIVPKGQNCSICLSEEPVAPRMVTCGHIFCLSCLLNFFSIEETVKNKETGYSKKKKYKECPLCGSIIGPKRVKPVLYEDDFDVTRLNQKPEPGATVHLQLMCKPHGSLLPLPVALHLDPLKCGNFPPANLGSIKHYAHIMKCGVSYSLELYQKDIVAIQEQYEIDKAIYNDSGKFVKQSIENINDQISTLLAATTDLSPLSNDINNGLDNFHFDDDLLTKYDDSSAYFFYQTLVASSTKYFLSPLDVKILLTIFHYYSKFPESIETTVENIHYDTVVTEQLIRRYKYIGHLPIGTEIALLDLDWRKIPFLPKEIYEQFAHELKQRRRKFTMKKQKEDKEKKLYEKRLEQEHAEFYRKENGNSLKFEDSVQMATHYESIVSSSIPLNSLGISMLGPPTNSCSTPQKQAPSHTKRTIWGTSIAVTEDEKASKENKEFQDMLLQRIRQEDSSDVTDSTDSPPTSNGKRGRKKKGKVMLFSSNHQALG.

Disordered regions lie at residues 1 to 84 and 124 to 145; these read MVEP…TSTR and EVER…RDEH. Positions 20–39 are enriched in polar residues; it reads DTLNATSNSSKQGVSNNKRN. Residues 51–66 are compositionally biased toward basic and acidic residues; sequence SDGRDNAHNYHGEGRR. The segment at 195 to 250 adopts an RING-type zinc-finger fold; sequence CSICLSEEPVAPRMVTCGHIFCLSCLLNFFSIEETVKNKETGYSKKKKYKECPLCG. Residues 609–670 form a disordered region; it reads TEDEKASKEN…LFSSNHQALG (62 aa). Basic and acidic residues predominate over residues 610–622; sequence EDEKASKENKEFQ. Residues 637-649 show a composition bias toward low complexity; sequence VTDSTDSPPTSNG.

It belongs to the RNF10 family.

It localises to the cytoplasm. It catalyses the reaction S-ubiquitinyl-[E2 ubiquitin-conjugating enzyme]-L-cysteine + [acceptor protein]-L-lysine = [E2 ubiquitin-conjugating enzyme]-L-cysteine + N(6)-ubiquitinyl-[acceptor protein]-L-lysine.. It participates in protein modification; protein ubiquitination. Functionally, E3 ubiquitin-protein ligase involved in the degradation of non-functional 18S rRNAs in response to stalled ribosomes. Catalyzes monoubiquitination of RPS3/uS3 in response to stalled ribosomes, initiating a HEL2-dependent response that activates the degradation of non-functional 18S rRNAs. The polypeptide is E3 ubiquitin-protein ligase MAG2 (Saccharomyces cerevisiae (strain ATCC 204508 / S288c) (Baker's yeast)).